Consider the following 726-residue polypeptide: Quinolinate synthase, chloroplastic (726 aa).

The N-terminal 67 residues, 1-67 (MDAANLVMKS…KKPSNNSTFT (67 aa)), are a transit peptide targeting the chloroplast. Cys133 (cysteine persulfide intermediate) is an active-site residue. Positions 283 and 309 each coordinate iminosuccinate. Residue Cys363 participates in [4Fe-4S] cluster binding. Iminosuccinate-binding positions include 392 to 394 (YIN) and Ser414. Cys487 lines the [4Fe-4S] cluster pocket. Iminosuccinate contacts are provided by residues 513–515 (HFE) and Thr538. Position 643 (Cys643) interacts with [4Fe-4S] cluster.

This sequence belongs to the quinolinate synthase family. Type 1 subfamily. Homodimer. It depends on [4Fe-4S] cluster as a cofactor.

It localises to the plastid. The protein resides in the chloroplast. It carries out the reaction iminosuccinate + dihydroxyacetone phosphate = quinolinate + phosphate + 2 H2O + H(+). The protein operates within alkaloid biosynthesis; nicotine biosynthesis. Its pathway is cofactor biosynthesis; NAD(+) biosynthesis; quinolinate from iminoaspartate: step 1/1. Its function is as follows. Involved in the biosynthesis of pyridine alkaloid natural products, leading mainly to the production of anabasine, anatabine, nicotine and nornicotine, effective deterrents against herbivores with antiparasitic and pesticide properties (neurotoxins); nornicotine serves as the precursor in the synthesis of the carcinogen compound N'-nitrosonornicotine (NNN). Catalyzes the condensation of iminoaspartate with dihydroxyacetone phosphate to form quinolinate. This chain is Quinolinate synthase, chloroplastic, found in Nicotiana tabacum (Common tobacco).